The primary structure comprises 332 residues: DNA repair and recombination protein RadA (332 aa).

G126–T133 lines the ATP pocket.

The protein belongs to the eukaryotic RecA-like protein family.

Its function is as follows. Involved in DNA repair and in homologous recombination. Binds and assemble on single-stranded DNA to form a nucleoprotein filament. Hydrolyzes ATP in a ssDNA-dependent manner and promotes DNA strand exchange between homologous DNA molecules. The chain is DNA repair and recombination protein RadA from Pyrobaculum calidifontis (strain DSM 21063 / JCM 11548 / VA1).